The primary structure comprises 757 residues: Transcription regulator rua1 (757 aa).

5 disordered regions span residues 122-169, 181-218, 237-295, 372-393, and 422-582; these read SSGS…LPVS, NHQV…SNQD, RNTG…NGYT, SADC…PYPL, and MELQ…IGNA. Residues 125 to 165 show a composition bias toward low complexity; it reads SATKSEPSTCSSSTDFSMSSTADASTAPQHSSSGDSSMSSG. Polar residues-rich tracts occupy residues 181–190 and 200–218; these read NHQVTTQDAS and QPPS…SNQD. The segment covering 240 to 249 has biased composition (basic residues); sequence GHRQHNRHQK. Residues 253–277 are compositionally biased toward polar residues; sequence LPQGQSCTNSGSSSRQVTRPNSPNH. A compositionally biased stretch (pro residues) spans 379-393; sequence PRPPSNSPEPHPYPL. Polar residues predominate over residues 428–437; that stretch reads PARSNSTFGR. The span at 439-453 shows a compositional bias: basic residues; sequence SQRHHQPPPSHRQRS. Low complexity-rich tracts occupy residues 454 to 465, 494 to 510, and 543 to 582; these read RTSASSISNTNA, ASQS…ATDA, and TSSS…IGNA. The C2H2-type 1 degenerate zinc-finger motif lies at 661–692; sequence REGWCSLCPQGEWYSMKRSQYLYHMQFDHGIS. Residues 717–750 form a C2H2-type 2; degenerate zinc finger; that stretch reads GLCHHCNKWIPICFGPQRKRDFKAWFKHARKCHR.

The protein localises to the nucleus. Transcription factor; part of the gene cluster that mediates the biosynthesis of the glycolipid biosurfactant ustilagic acid (UA). UA is a secreted cellobiose glycolipid that is toxic for many microorganisms and confers biocontrol activity to U.maydis. Recognizes and binds to the specific 5'-T/G-G/T-C-G-C-A-T-A/T-C/T-C/T-G/A-3' upstream activating sequence found in all promoters of the UA biosynthesis genes. This Mycosarcoma maydis (Corn smut fungus) protein is Transcription regulator rua1.